The primary structure comprises 699 residues: Protein phosphatase 1 regulatory subunit 37 (699 aa).

Pro residues predominate over residues 1–12 (MEIPPQEAPPGP). Residues 1-42 (MEIPPQEAPPGPGADGEAEEAPVEAPSPGPASPPADGRLKAA) are disordered. 2 positions are modified to phosphoserine: serine 50 and serine 56. LRR repeat units follow at residues 220–240 (SLAVLHLESSSLSGRPLMLLA), 248–269 (TLRELYLADNKLNGLQDSAQLG), 277–297 (SLQILDLRNNHVLDSGLAYIC), 306–326 (GLATLVLWNNQLTHTGMAFLG), and 334–354 (SLETLNLGHNPIGNEGVRNLK). The segment at 467 to 667 (RLQLSASMPE…PPGPEAKVGS (201 aa)) is disordered. Residues 510–525 (SDSDSDSEGEDRDEAD) show a composition bias toward acidic residues. Phosphoserine is present on serine 566. Pro residues-rich tracts occupy residues 588–613 (PPVPPAPPGPVSPPASASPPTSPFPT) and 622–642 (DPGPPEPQPPLEPPQVGPPLP).

The protein belongs to the PPP1R37 family. Interacts with PPP1CA.

In terms of biological role, inhibits phosphatase activity of protein phosphatase 1 (PP1) complexes. The polypeptide is Protein phosphatase 1 regulatory subunit 37 (PPP1R37) (Bos taurus (Bovine)).